A 258-amino-acid chain; its full sequence is Proteasome subunit beta type-1 (258 aa).

It belongs to the peptidase T1B family. In terms of assembly, the 26S proteasome consists of a 20S proteasome core and two 19S regulatory subunits. The 20S proteasome core is composed of 28 subunits that are arranged in four stacked rings, resulting in a barrel-shaped structure. The two end rings are each formed by seven alpha subunits, and the two central rings are each formed by seven beta subunits. The catalytic chamber with the active sites is on the inside of the barrel.

Its subcellular location is the cytoplasm. It is found in the nucleus. Its function is as follows. Non-catalytic component of the proteasome, a multicatalytic proteinase complex which is characterized by its ability to cleave peptides with Arg, Phe, Tyr, Leu, and Glu adjacent to the leaving group at neutral or slightly basic pH. The proteasome has an ATP-dependent proteolytic activity. This Caenorhabditis elegans protein is Proteasome subunit beta type-1 (pbs-6).